Consider the following 804-residue polypeptide: MVGGGRTGIHLLLGFLIGAALALFFFSSTPSIDLTSSLAAFTSCQNQETETNVLEPSALEKGRVYKDLSEHWIVHQDDMPAPPHNQDATPKVTRTRFAATELGTRERVMAAVMAESALALSINATLGRHVPRVHLFADSSRIDNDLAQLTNLSPYKLNGQKTHSMVLGLLFNMTVHNNYDWFLLAKDSTYINPFVLLRMIDTMNWNEPVVMGEAAEDGSGRCRLDTGMLLSQPAMHALMNNRNACNNFALAADDDQLAFEKCIQIATNLTCKPLHQGVRYEVWRGAERADSPAAHDSIEDWKHSPAFKRALAVPRLLSDADASALHDYFVRVEMQRADREIIKMEAELSRLAEQEARETGEAISWPPALPPYAKPPNRYQVSTWEYFTMTELFRSEPNQNVRRLEGKDFDDVAEVVVAARQQVESEEPELEFVQLRNGYRVFDPRRGMDYMVDLTYRKTVNEMPEVDNRFESDNEAAHEESLKEIVVERRVHVSRMIASTQLMNQAPYVKEDTDVTVVIPVASEKDVLPARKLLARQARLCLFPTEEARKTRMVVAVFPLIESRSVTAITNDMEELKRRCKRSLLETDVLPVHPAVSTEGKGTAAAAALDDAVDRYGANTIYLLLSPHADVQKEFFDRARINTIKHYQVFFPVPFVEYHPTISGMEMTEKEEKETPTEQAREAALSRLRDGVEPKRKRTLIVQKEHGRFDSQDFSCFAVYGVDYVTARAKFGQNERRNDLISAFLGQDSIHVLRAVEPTLRIRYHKRSCDMESIDTEDIARCLDSKKENVAAKDQLAKLLFHEK.

Residues 1-6 are Cytoplasmic-facing; sequence MVGGGR. The helical; Signal-anchor for type II membrane protein transmembrane segment at 7–27 threads the bilayer; sequence TGIHLLLGFLIGAALALFFFS. Residues 28-804 are Lumenal-facing; sequence STPSIDLTSS…QLAKLLFHEK (777 aa). N-linked (GlcNAc...) asparagine glycans are attached at residues Asn123, Asn172, and Asn268.

It belongs to the chondroitin N-acetylgalactosaminyltransferase family. Interacts with sqv-5. A divalent metal cation is required as a cofactor. In terms of tissue distribution, expressed in seam cells, the vulval epithelium and in oocytes (at protein level).

Its subcellular location is the golgi apparatus. The protein localises to the golgi stack membrane. It catalyses the reaction 3-O-(beta-D-GlcA-(1-&gt;3)-beta-D-GalNAc-(1-&gt;4)-beta-D-GlcA-(1-&gt;3)-beta-D-Gal-(1-&gt;3)-beta-D-Gal-(1-&gt;4)-beta-D-Xyl)-L-seryl-[protein] + UDP-N-acetyl-alpha-D-galactosamine = 3-O-(beta-D-GalNAc-(1-&gt;4)-beta-D-GlcA-(1-&gt;3)-beta-D-GalNAc-(1-&gt;4)-beta-D-GlcA-(1-&gt;3)-beta-D-Gal-(1-&gt;3)-beta-D-Gal-(1-&gt;4)-beta-D-Xyl)-L-seryl-[protein] + UDP + H(+). It carries out the reaction 3-O-{beta-D-GlcA-(1-&gt;3)-[beta-D-GalNAc-(1-&gt;4)-beta-D-GlcA-(1-&gt;3)](n)-beta-D-GalNAc-(1-&gt;4)-beta-D-GlcA-(1-&gt;3)-beta-D-Gal-(1-&gt;3)-beta-D-Gal-(1-&gt;4)-beta-D-Xyl}-L-seryl-[protein] + UDP-N-acetyl-alpha-D-galactosamine = 3-O-{[beta-D-GalNAc-(1-&gt;4)-beta-D-GlcA-(1-&gt;3)](n+1)-beta-D-GalNAc-(1-&gt;4)-beta-D-GlcA-(1-&gt;3)-beta-D-Gal-(1-&gt;3)-beta-D-Gal-(1-&gt;4)-beta-D-Xyl}-L-seryl-[protein] + UDP + H(+). The catalysed reaction is 3-O-(beta-D-GalNAc-(1-&gt;4)-beta-D-GlcA-(1-&gt;3)-beta-D-Gal-(1-&gt;3)-beta-D-Gal-(1-&gt;4)-beta-D-Xyl)-L-seryl-[protein] + UDP-alpha-D-glucuronate = 3-O-(beta-D-GlcA-(1-&gt;3)-beta-D-GalNAc-(1-&gt;4)-beta-D-GlcA-(1-&gt;3)-beta-D-Gal-(1-&gt;3)-beta-D-Gal-(1-&gt;4)-beta-D-Xyl)-L-seryl-[protein] + UDP + H(+). The enzyme catalyses 3-O-{[beta-D-GalNAc-(1-&gt;4)-beta-D-GlcA-(1-&gt;3)](n)-beta-D-GalNAc-(1-&gt;4)-beta-D-GlcA-(1-&gt;3)-beta-D-Gal-(1-&gt;3)-beta-D-Gal-(1-&gt;4)-beta-D-Xyl}-L-seryl-[protein] + UDP-alpha-D-glucuronate = 3-O-{beta-D-GlcA-(1-&gt;3)-[beta-D-GalNAc-(1-&gt;4)-beta-D-GlcA-(1-&gt;3)](n)-beta-D-GalNAc-(1-&gt;4)-beta-D-GlcA-(1-&gt;3)-beta-D-Gal-(1-&gt;3)-beta-D-Gal-(1-&gt;4)-beta-D-Xyl}-L-seryl-[protein] + UDP + H(+). Its function is as follows. Has both beta-1,3-glucuronic acid and beta-1,4-N-acetylgalactosamine transferase activity. Transfers glucuronic acid (GlcUA) from UDP-GlcUA and N-acetylgalactosamine (GalNAc) from UDP-GalNAc to the non-reducing end of the elongating chondroitin polymer. Required together with sqv-5 for the biosynthesis of chondroitin. Chondroitin is involved in organogenesis of the vulva, maturation of the gonad, and neural development. May have a specific role in unc-6/netrin-mediated dorsal guidance of gonadal distal tip cells. Glycosyltransferase activity is weak. In Caenorhabditis elegans, this protein is Chondroitin sulfate synthase mig-22 (mig-22).